The following is a 93-amino-acid chain: Small ribosomal subunit protein uS19 (93 aa).

This sequence belongs to the universal ribosomal protein uS19 family.

Protein S19 forms a complex with S13 that binds strongly to the 16S ribosomal RNA. The chain is Small ribosomal subunit protein uS19 from Dehalococcoides mccartyi (strain ATCC BAA-2100 / JCM 16839 / KCTC 5957 / BAV1).